Here is a 107-residue protein sequence, read N- to C-terminus: Conantokin-R (107 aa).

Residues 1-24 (MQLYTYLYLLVSLVTFYLILGTGT) form the signal peptide. Residues 25–80 (LGHGGALTERRSTDATALKPEPVLLQKSSARSTDDNGNDRLTQMKRILKKRGNKAR) constitute a propeptide that is removed on maturation. A disordered region spans residues 26 to 64 (GHGGALTERRSTDATALKPEPVLLQKSSARSTDDNGNDR). Glu-83, Glu-84, Glu-91, and Glu-95 each carry 4-carboxyglutamate. Residues Glu-91 and Glu-95 each contribute to the a divalent metal cation site. Cys-101 and Cys-105 form a disulfide bridge.

The protein belongs to the conotoxin B superfamily. The cofactor is Ca(2+). Requires Mg(2+) as cofactor. In terms of tissue distribution, expressed by the venom duct.

The protein localises to the secreted. Conantokins inhibit N-methyl-D-aspartate (NMDA) receptors. This toxin is potent in the following order of preference: NR2B approximately NR2A/GRIN2A &gt; NR2C/GRIN2C &gt;&gt; NR2D/GRIN2D. Induces sleep-like symptoms in young mice. Is a highly potent anticonvulsant compound. The sequence is that of Conantokin-R from Conus radiatus (Rayed cone).